A 457-amino-acid polypeptide reads, in one-letter code: tRNA-2-methylthio-N(6)-dimethylallyladenosine synthase (457 aa).

The region spanning 18 to 133 (KKLFIETYGC…LPELIASVEA (116 aa)) is the MTTase N-terminal domain. Residues cysteine 27, cysteine 63, cysteine 97, cysteine 171, cysteine 175, and cysteine 178 each coordinate [4Fe-4S] cluster. The 234-residue stretch at 157–390 (CGNHISGFVS…IALQNRLSAE (234 aa)) folds into the Radical SAM core domain. The region spanning 393–456 (NRCIGKTYEV…SATLKGEEVF (64 aa)) is the TRAM domain.

It belongs to the methylthiotransferase family. MiaB subfamily. Monomer. It depends on [4Fe-4S] cluster as a cofactor.

It localises to the cytoplasm. The catalysed reaction is N(6)-dimethylallyladenosine(37) in tRNA + (sulfur carrier)-SH + AH2 + 2 S-adenosyl-L-methionine = 2-methylsulfanyl-N(6)-dimethylallyladenosine(37) in tRNA + (sulfur carrier)-H + 5'-deoxyadenosine + L-methionine + A + S-adenosyl-L-homocysteine + 2 H(+). Functionally, catalyzes the methylthiolation of N6-(dimethylallyl)adenosine (i(6)A), leading to the formation of 2-methylthio-N6-(dimethylallyl)adenosine (ms(2)i(6)A) at position 37 in tRNAs that read codons beginning with uridine. The sequence is that of tRNA-2-methylthio-N(6)-dimethylallyladenosine synthase from Bacteroides fragilis (strain ATCC 25285 / DSM 2151 / CCUG 4856 / JCM 11019 / LMG 10263 / NCTC 9343 / Onslow / VPI 2553 / EN-2).